Here is a 220-residue protein sequence, read N- to C-terminus: Uracil-DNA glycosylase (220 aa).

Residue Asp60 is the Proton acceptor of the active site.

Belongs to the uracil-DNA glycosylase (UDG) superfamily. UNG family.

The protein resides in the cytoplasm. It carries out the reaction Hydrolyzes single-stranded DNA or mismatched double-stranded DNA and polynucleotides, releasing free uracil.. Its function is as follows. Excises uracil residues from the DNA which can arise as a result of misincorporation of dUMP residues by DNA polymerase or due to deamination of cytosine. The protein is Uracil-DNA glycosylase of Francisella tularensis subsp. holarctica (strain FTNF002-00 / FTA).